A 265-amino-acid polypeptide reads, in one-letter code: Exosome complex component RRP42 (265 aa).

It belongs to the RNase PH family. Component of the RNA exosome complex. Specifically part of the catalytically inactive RNA exosome core complex (Exo-9) which may associate with the catalytic subunits RRP6 and DIS3 in cytoplasmic- and nuclear-specific RNA exosome complex forms. Exo-9 is formed by a hexameric base ring of RNase PH domain-containing subunits and a cap ring consisting of CSL4, RRP4 and RRP40.

The protein localises to the cytoplasm. The protein resides in the nucleus. It is found in the nucleolus. Non-catalytic component of the RNA exosome complex which has 3'-&gt;5' exoribonuclease activity and participates in a multitude of cellular RNA processing and degradation events. In the nucleus, the RNA exosome complex is involved in proper maturation of stable RNA species such as rRNA, snRNA and snoRNA, in the elimination of RNA processing by-products and non-coding 'pervasive' transcripts, such as antisense RNA species and cryptic unstable transcripts (CUTs), and of mRNAs with processing defects, thereby limiting or excluding their export to the cytoplasm. In the cytoplasm, the RNA exosome complex is involved in general mRNA turnover and in RNA surveillance pathways, preventing translation of aberrant mRNAs. The catalytic inactive RNA exosome core complex of 9 subunits (Exo-9) is proposed to play a pivotal role in the binding and presentation of RNA for ribonucleolysis, and to serve as a scaffold for the association with catalytic subunits and accessory proteins or complexes. RRP42 is part of the hexameric ring of RNase PH domain-containing subunits proposed to form a central channel which threads RNA substrates for degradation. The protein is Exosome complex component RRP42 (RRP42) of Saccharomyces cerevisiae (strain ATCC 204508 / S288c) (Baker's yeast).